The following is a 381-amino-acid chain: V-type proton ATPase subunit C 1-B (381 aa).

At threonine 2 the chain carries N-acetylthreonine.

The protein belongs to the V-ATPase C subunit family. V-ATPase is a heteromultimeric enzyme made up of two complexes: the ATP-hydrolytic V1 complex and the proton translocation V0 complex. The V1 complex consists of three catalytic AB heterodimers that form a heterohexamer, three peripheral stalks each consisting of EG heterodimers, one central rotor including subunits D and F, and the regulatory subunits C and H. The proton translocation complex V0 consists of the proton transport subunit a, a ring of proteolipid subunits c9c'', rotary subunit d, subunits e and f, and two accessory subunits.

Functionally, subunit of the V1 complex of vacuolar(H+)-ATPase (V-ATPase), a multisubunit enzyme composed of a peripheral complex (V1) that hydrolyzes ATP and a membrane integral complex (V0) that translocates protons. V-ATPase is responsible for acidifying and maintaining the pH of intracellular compartments and in some cell types, is targeted to the plasma membrane, where it is responsible for acidifying the extracellular environment. Subunit C is necessary for the assembly of the catalytic sector of the enzyme and is likely to have a specific function in its catalytic activity. The chain is V-type proton ATPase subunit C 1-B (atp6v1c1b) from Danio rerio (Zebrafish).